The following is a 292-amino-acid chain: uncharacterized protein (292 aa).

This is an uncharacterized protein from Escherichia coli (strain K12).